The chain runs to 89 residues: Cell division topological specificity factor (89 aa).

This sequence belongs to the MinE family.

Its function is as follows. Prevents the cell division inhibition by proteins MinC and MinD at internal division sites while permitting inhibition at polar sites. This ensures cell division at the proper site by restricting the formation of a division septum at the midpoint of the long axis of the cell. This chain is Cell division topological specificity factor, found in Janthinobacterium sp. (strain Marseille) (Minibacterium massiliensis).